Here is an 838-residue protein sequence, read N- to C-terminus: Major vault protein (838 aa).

MVP repeat units lie at residues 13-52, 53-114, 118-170, 171-223, 224-278, 280-328, 329-380, and 381-433; these read VHILDNNTNVTRCMVGPLVYTRKENERCLFNPKPCIVVPP, RFYC…FKLK, VNTG…HIIS, PNTA…ITLT, DTEA…IVLN, KEYC…NVVS, KDQA…IALD, and KNEG…CMSE.

The vault ribonucleoprotein particle is a huge (400 A x 670 A) cage structure of 12.9 MDa. It consists of a dimer of half-vaults, with each half-vault comprising 39 identical major vault protein (MVP) chains, PARP4 and one or more vault RNAs (vRNAs).

The protein localises to the cytoplasm. Its subcellular location is the nucleus. In terms of biological role, required for normal vault structure. Vaults are multi-subunit structures that may act as scaffolds for proteins involved in signal transduction. Vaults may also play a role in nucleo-cytoplasmic transport. This Trypanosoma cruzi (strain CL Brener) protein is Major vault protein.